We begin with the raw amino-acid sequence, 349 residues long: Phenylalanine--tRNA ligase alpha subunit (349 aa).

Position 259 (E259) interacts with Mg(2+).

This sequence belongs to the class-II aminoacyl-tRNA synthetase family. Phe-tRNA synthetase alpha subunit type 1 subfamily. As to quaternary structure, tetramer of two alpha and two beta subunits. Mg(2+) serves as cofactor.

It is found in the cytoplasm. The enzyme catalyses tRNA(Phe) + L-phenylalanine + ATP = L-phenylalanyl-tRNA(Phe) + AMP + diphosphate + H(+). In Lactobacillus delbrueckii subsp. bulgaricus (strain ATCC 11842 / DSM 20081 / BCRC 10696 / JCM 1002 / NBRC 13953 / NCIMB 11778 / NCTC 12712 / WDCM 00102 / Lb 14), this protein is Phenylalanine--tRNA ligase alpha subunit.